We begin with the raw amino-acid sequence, 160 residues long: Phosphopantetheine adenylyltransferase (160 aa).

Residue threonine 10 participates in substrate binding. ATP-binding positions include 10–11 (TF) and histidine 18. Substrate-binding residues include lysine 42, leucine 74, and arginine 88. Residues 89–91 (GLR), glutamate 99, and 124–130 (NSFISST) contribute to the ATP site.

This sequence belongs to the bacterial CoaD family. As to quaternary structure, homohexamer. Requires Mg(2+) as cofactor.

It localises to the cytoplasm. It catalyses the reaction (R)-4'-phosphopantetheine + ATP + H(+) = 3'-dephospho-CoA + diphosphate. It participates in cofactor biosynthesis; coenzyme A biosynthesis; CoA from (R)-pantothenate: step 4/5. Its function is as follows. Reversibly transfers an adenylyl group from ATP to 4'-phosphopantetheine, yielding dephospho-CoA (dPCoA) and pyrophosphate. This chain is Phosphopantetheine adenylyltransferase, found in Shewanella piezotolerans (strain WP3 / JCM 13877).